A 295-amino-acid polypeptide reads, in one-letter code: MIAELEGIDIRENEALKHYTYTQVGGPADFLAFPRNHYELSRIVDYANHNHIPWMVLGNASNLIVRDGGIRGFVIMFDKLNTVRLNGYTLEAEAGANLIETTKVAKFHSLTGFEFACGIPGSIGGAVFMNAGAYGGEIAHIFLSAKVLTPEGKIKKISAREMAFGYRHSVIQETGDIVISAKFALKPGNHDSICQEMNRLNHLRQLKQPLEFPSCGSVFKRPPGHFAGQLIMDANLKGHRVGGVEVSKKHAGFMINVADGSAKDYEELIAHVIKTVEQTSGVRLEPEVRIIGESL.

The FAD-binding PCMH-type domain maps to 23–188 (QVGGPADFLA…ISAKFALKPG (166 aa)). Arg167 is a catalytic residue. Ser217 (proton donor) is an active-site residue. Residue Glu287 is part of the active site.

This sequence belongs to the MurB family. FAD serves as cofactor.

The protein localises to the cytoplasm. It carries out the reaction UDP-N-acetyl-alpha-D-muramate + NADP(+) = UDP-N-acetyl-3-O-(1-carboxyvinyl)-alpha-D-glucosamine + NADPH + H(+). It functions in the pathway cell wall biogenesis; peptidoglycan biosynthesis. Its function is as follows. Cell wall formation. This chain is UDP-N-acetylenolpyruvoylglucosamine reductase, found in Streptococcus equi subsp. zooepidemicus (strain H70).